The following is a 192-amino-acid chain: UPF0301 protein Bmul_2524/BMULJ_00714 (192 aa).

The protein belongs to the UPF0301 (AlgH) family.

The chain is UPF0301 protein Bmul_2524/BMULJ_00714 from Burkholderia multivorans (strain ATCC 17616 / 249).